Reading from the N-terminus, the 470-residue chain is MTPFMTEDFLLDTEFARRLYHDYAKDQPIFDYHCHLPPQQVAENYRFKNLYDIWLKGDHYKWRAMRTNGVPERLCTGDASDREKFDAWAATVPHTIGNPLYHWTHLELRRPFGITGKLLSPSTADEIWDQCNDLLAQDAFSARGIMKQMNVKMVGTTDDPIDSLEHHAVVAKDTSFDIKVLPSWRPDKAFNIEQATFNDYMAKLGEVSDTDIRRFADLQSALTKRLDHFAAHGCKVSDHALDVVLFAEATDAELDAILARRLAGETLSAHEVAQFKTAVLVFLGAEYARRGWVQQYHIGALRNNNLRQFKLLGPDVGFDSINDRPMAEELSKLLSKQNEENLLPKTILYCLNPRDNEVLGTMIGNFQGEGMPGKMQFGSGWWFNDQKDGMERQMTQLAQLGLLSRFVGMLTDSRSFLSYTRHEYFRRILCQMIGRWVAAGEAPADIALLGEMVKNICFNNARDYFAIELN.

This sequence belongs to the metallo-dependent hydrolases superfamily. Uronate isomerase family.

It catalyses the reaction D-glucuronate = D-fructuronate. The enzyme catalyses aldehydo-D-galacturonate = keto-D-tagaturonate. It participates in carbohydrate metabolism; pentose and glucuronate interconversion. The polypeptide is Uronate isomerase (Klebsiella pneumoniae (strain 342)).